The primary structure comprises 217 residues: Oxygen-insensitive NAD(P)H nitroreductase (217 aa).

An FMN-binding site is contributed by 10-14; that stretch reads RYSTK. 5 residues coordinate NAD(+): Lys-14, Thr-41, Asn-71, Lys-74, and Arg-107. Asn-71 is an FMN binding site. FMN is bound by residues 165–166 and 205–207; these read EG and KSR.

It belongs to the nitroreductase family. Homodimer. Requires FMN as cofactor.

Functionally, reduction of a variety of nitroaromatic compounds using NADH (and to lesser extent NADPH) as source of reducing equivalents; two electrons are transferred. Capable of reducing nitrofurazone. The polypeptide is Oxygen-insensitive NAD(P)H nitroreductase (Salmonella typhimurium (strain LT2 / SGSC1412 / ATCC 700720)).